We begin with the raw amino-acid sequence, 273 residues long: Nucleotide-binding protein TT_C1664 (273 aa).

Residue 8-15 coordinates ATP; the sequence is GLSGAGKT. 57–60 serves as a coordination point for GTP; that stretch reads DARA.

The protein belongs to the RapZ-like family.

Functionally, displays ATPase and GTPase activities. This is Nucleotide-binding protein TT_C1664 from Thermus thermophilus (strain ATCC BAA-163 / DSM 7039 / HB27).